The primary structure comprises 430 residues: Adenylosuccinate synthetase (430 aa).

Residues 12–18 and 40–42 each bind GTP; these read GDEGKGK and GHT. The active-site Proton acceptor is D13. Residues D13 and G40 each coordinate Mg(2+). Residues 13–16, 38–41, T130, R144, Q224, T239, and R303 each bind IMP; these read DEGK and NAGH. H41 serves as the catalytic Proton donor. Residue 299 to 305 coordinates substrate; sequence TTTGRKR. Residues R305, 331–333, and 413–415 contribute to the GTP site; these read KLD and STS.

Belongs to the adenylosuccinate synthetase family. In terms of assembly, homodimer. Mg(2+) serves as cofactor.

The protein resides in the cytoplasm. The catalysed reaction is IMP + L-aspartate + GTP = N(6)-(1,2-dicarboxyethyl)-AMP + GDP + phosphate + 2 H(+). It participates in purine metabolism; AMP biosynthesis via de novo pathway; AMP from IMP: step 1/2. In terms of biological role, plays an important role in the de novo pathway of purine nucleotide biosynthesis. Catalyzes the first committed step in the biosynthesis of AMP from IMP. The polypeptide is Adenylosuccinate synthetase (Ruegeria pomeroyi (strain ATCC 700808 / DSM 15171 / DSS-3) (Silicibacter pomeroyi)).